The following is a 141-amino-acid chain: Hemoglobin subunit beta-C (141 aa).

Residues proline 1–histidine 141 form the Globin domain. Positions 58 and 87 each coordinate heme b.

It belongs to the globin family. As to quaternary structure, heterotetramer of two alpha chains and two beta chains. As to expression, red blood cells.

Involved in oxygen transport from the lung to the various peripheral tissues. The polypeptide is Hemoglobin subunit beta-C (HBBC) (Ovis aries musimon (Mouflon)).